A 95-amino-acid chain; its full sequence is Progonadoliberin-1 (95 aa).

An N-terminal signal peptide occupies residues 1-22 (MAPQTFALWLLLVGTLLGQGCC). Pyrrolidone carboxylic acid is present on Gln23. Gly32 carries the glycine amide modification.

The protein belongs to the GnRH family.

It localises to the secreted. In terms of biological role, stimulates the secretion of gonadotropins. This chain is Progonadoliberin-1 (gnrh1), found in Morone saxatilis (Striped bass).